Reading from the N-terminus, the 196-residue chain is MRLCDRDIEIWLKKNKLIITPRPSKDRINGATVDLKLWNKFRIFESYNAAYIDFDLISSLKNNNSNSWNYNMTNEIKISEKEKFFLHPGELVLALTLESITIPDNLIGWLDGRSSLARFGLMVHATSHRIDPGWSGNIVLEFYNSGKLPILLRPNMIIGSISFELLTNSAIRPYNKKKNAKYLNQIDTVIKINNLT.

DCTP-binding positions include 113-118 (RSSLAR), aspartate 131, 139-141 (VLE), tyrosine 174, lysine 181, and glutamine 185. Catalysis depends on glutamate 141, which acts as the Proton donor/acceptor.

Belongs to the dCTP deaminase family. Homotrimer.

It catalyses the reaction dCTP + H2O + H(+) = dUTP + NH4(+). It participates in pyrimidine metabolism; dUMP biosynthesis; dUMP from dCTP (dUTP route): step 1/2. Functionally, catalyzes the deamination of dCTP to dUTP. This Wigglesworthia glossinidia brevipalpis protein is dCTP deaminase.